Here is a 146-residue protein sequence, read N- to C-terminus: Hemoglobin subunit beta (146 aa).

Val1 is modified (N-acetylvaline). The region spanning 2–146 (HLTPEEKNAV…VANALAHKYH (145 aa)) is the Globin domain. Thr12 bears the Phosphothreonine mark. Residue Ser44 is modified to Phosphoserine. The residue at position 59 (Lys59) is an N6-acetyllysine. His63 provides a ligand contact to heme b. N6-acetyllysine is present on Lys82. His92 contributes to the heme b binding site. Position 93 is an S-nitrosocysteine (Cys93). Residue Lys144 is modified to N6-acetyllysine.

Belongs to the globin family. As to quaternary structure, heterotetramer of two alpha chains and two beta chains. As to expression, red blood cells.

Its function is as follows. Involved in oxygen transport from the lung to the various peripheral tissues. The polypeptide is Hemoglobin subunit beta (HBB) (Macaca mulatta (Rhesus macaque)).